Here is a 171-residue protein sequence, read N- to C-terminus: uncharacterized protein (171 aa).

To M.jannaschii MJ0417.

This is an uncharacterized protein from Methanocaldococcus jannaschii (strain ATCC 43067 / DSM 2661 / JAL-1 / JCM 10045 / NBRC 100440) (Methanococcus jannaschii).